The sequence spans 323 residues: Lipoyl synthase (323 aa).

7 residues coordinate [4Fe-4S] cluster: Cys61, Cys66, Cys72, Cys87, Cys91, Cys94, and Ser300. Residues 73 to 289 (WDKKHATFMI…ETVAYTKGFL (217 aa)) form the Radical SAM core domain.

The protein belongs to the radical SAM superfamily. Lipoyl synthase family. The cofactor is [4Fe-4S] cluster.

It localises to the cytoplasm. The enzyme catalyses [[Fe-S] cluster scaffold protein carrying a second [4Fe-4S](2+) cluster] + N(6)-octanoyl-L-lysyl-[protein] + 2 oxidized [2Fe-2S]-[ferredoxin] + 2 S-adenosyl-L-methionine + 4 H(+) = [[Fe-S] cluster scaffold protein] + N(6)-[(R)-dihydrolipoyl]-L-lysyl-[protein] + 4 Fe(3+) + 2 hydrogen sulfide + 2 5'-deoxyadenosine + 2 L-methionine + 2 reduced [2Fe-2S]-[ferredoxin]. The protein operates within protein modification; protein lipoylation via endogenous pathway; protein N(6)-(lipoyl)lysine from octanoyl-[acyl-carrier-protein]: step 2/2. Its function is as follows. Catalyzes the radical-mediated insertion of two sulfur atoms into the C-6 and C-8 positions of the octanoyl moiety bound to the lipoyl domains of lipoate-dependent enzymes, thereby converting the octanoylated domains into lipoylated derivatives. The sequence is that of Lipoyl synthase from Sinorhizobium medicae (strain WSM419) (Ensifer medicae).